The sequence spans 412 residues: Tryptophan synthase beta chain (412 aa).

Residue Lys-105 is modified to N6-(pyridoxal phosphate)lysine.

The protein belongs to the TrpB family. As to quaternary structure, tetramer of two alpha and two beta chains. Pyridoxal 5'-phosphate is required as a cofactor.

It catalyses the reaction (1S,2R)-1-C-(indol-3-yl)glycerol 3-phosphate + L-serine = D-glyceraldehyde 3-phosphate + L-tryptophan + H2O. It functions in the pathway amino-acid biosynthesis; L-tryptophan biosynthesis; L-tryptophan from chorismate: step 5/5. Its function is as follows. The beta subunit is responsible for the synthesis of L-tryptophan from indole and L-serine. The polypeptide is Tryptophan synthase beta chain (trpB) (Synechocystis sp. (strain ATCC 27184 / PCC 6803 / Kazusa)).